A 507-amino-acid polypeptide reads, in one-letter code: Tryptamine 4-monooxygenase (507 aa).

The signal sequence occupies residues 1–19; sequence MIVLLVSLVLAGCIYYANA. The interval 403–425 is disordered; the sequence is PNPSEFRPERYLSSDGKPDPTVR. A compositionally biased stretch (basic and acidic residues) spans 408–425; it reads FRPERYLSSDGKPDPTVR. Cysteine 439 contributes to the heme binding site.

The protein belongs to the cytochrome P450 family. Heme serves as cofactor.

The enzyme catalyses tryptamine + AH2 + O2 = 4-hydroxytryptamine + A + H2O. The protein operates within secondary metabolite biosynthesis. Its function is as follows. Tryptamine 4-monooxygenase; part of the gene cluster that mediates the biosynthesis of psilocybin, a psychotropic tryptamine-derived natural product. The first step in the pathway is the decarboxylation of L-tryptophan to tryptamine by the decarboxylase psiD. PsiD does not decarboxylate phenylalanine, tyrosine, or 5-hydroxy- L -tryptophan (5-HTP). 4-hydroxy-L-tryptophan is accepted as substrate by psiD as well. The cytochrome P450 monooxygenase psiH then converts tryptamine to 4-hydroxytryptamine. The kinase psiK catalyzes the 4-O-phosphorylation step by converting 4-hydroxytryptamine into norbaeocystin. The methyltransferase psiM then catalyzes iterative methyl transfer to the amino group of norbaeocystin to yield psilocybin via a monomethylated intermediate, baeocystin. The polypeptide is Tryptamine 4-monooxygenase (Psilocybe cyanescens).